A 967-amino-acid polypeptide reads, in one-letter code: Siderophore exporter MmpL4 (967 aa).

Transmembrane regions (helical) follow at residues 26–46 (AFAV…TVFV), 210–230 (VIFI…LLLI), 242–262 (VVAV…VSLL), 303–323 (AHVI…LSFA), 333–353 (IPCA…GPAV), 384–404 (WPLP…LALP), 769–789 (WDLL…MLII), 793–813 (FIAA…SFGL), 821–841 (ILAI…LLAV), 875–895 (VVTN…VSDL), and 913–934 (TLIV…WFWW). A disordered region spans residues 943-967 (ARTPTVPSETQPAGRPLAMSSDRLG).

This sequence belongs to the resistance-nodulation-cell division (RND) (TC 2.A.6) family. MmpL subfamily. In terms of assembly, interacts with MmpS4.

The protein resides in the cell inner membrane. In terms of biological role, part of an export system, which is required for biosynthesis and secretion of siderophores. The polypeptide is Siderophore exporter MmpL4 (mmpL4) (Mycobacterium tuberculosis (strain CDC 1551 / Oshkosh)).